A 285-amino-acid polypeptide reads, in one-letter code: Putative lipoprotein SCO4650 (285 aa).

The N-terminal stretch at 1–20 (MTGTTARRTVVSVAVSAALA) is a signal peptide. Cys21 carries N-palmitoyl cysteine lipidation. Cys21 is lipidated: S-diacylglycerol cysteine. The disordered stretch occupies residues 27-63 (GPGGSDDAGHSTGPTGSARPSASAPASSRAPALTGPS). Low complexity predominate over residues 43–58 (SARPSASAPASSRAPA).

It is found in the cell membrane. This is Putative lipoprotein SCO4650 from Streptomyces coelicolor (strain ATCC BAA-471 / A3(2) / M145).